Here is a 461-residue protein sequence, read N- to C-terminus: Coronin-1A (461 aa).

N-acetylserine is present on S2. Residue S2 is modified to Phosphoserine; by PKC. WD repeat units follow at residues 13 to 63 (HVFG…LVLP), 73 to 110 (NVPM…MVWE), 123 to 160 (PVVT…LVWD), 164 to 204 (GVAV…RIIE), 207 to 251 (KGTI…ALWD), 258 to 296 (PLSL…RYFE), and 302 to 349 (PFLH…EPIA). Basic and acidic residues predominate over residues 404–418 (LRVNRGLDTGRKRTT). Residues 404 to 429 (LRVNRGLDTGRKRTTPEASGAPSSDA) form a disordered region. Phosphothreonine; by PKC is present on T412. T418 is subject to Phosphothreonine. The residue at position 422 (S422) is a Phosphoserine. A coiled-coil region spans residues 424 to 460 (APSSDAISRLEEEMRKLQATVQELQKRLDRLEETVQA). K449 carries the post-translational modification N6-acetyllysine.

The protein belongs to the WD repeat coronin family. Binds actin. In terms of processing, phosphorylation at Thr-412 by PKC strongly down-regulates the association with actin. Polyubiquitinated by RNF128 with 'Lys-48'-linked chains, leading to proteasomal degradation. Expressed in brain, thymus, spleen, bone marrow and lymph node. Low in lung and gut.

Its subcellular location is the cytoplasm. The protein resides in the cytoskeleton. It is found in the cell cortex. The protein localises to the cytoplasmic vesicle. It localises to the phagosome membrane. Its function is as follows. May be a crucial component of the cytoskeleton of highly motile cells, functioning both in the invagination of large pieces of plasma membrane, as well as in forming protrusions of the plasma membrane involved in cell locomotion. In mycobacteria-infected macrophages, its retention on the phagosomal membrane prevents fusion between phagosomes and lysosomes. This chain is Coronin-1A (CORO1A), found in Bos taurus (Bovine).